Here is a 374-residue protein sequence, read N- to C-terminus: tRNA-specific 2-thiouridylase MnmA (374 aa).

ATP contacts are provided by residues Gly-12–Ser-19 and Met-38. The interval Asn-98–Asp-100 is interaction with target base in tRNA. Catalysis depends on Cys-103, which acts as the Nucleophile. Cys-103 and Cys-200 are joined by a disulfide. Gly-127 is an ATP binding site. An interaction with tRNA region spans residues Lys-150 to Gln-152. Cys-200 functions as the Cysteine persulfide intermediate in the catalytic mechanism. Residues Arg-311–Tyr-312 are interaction with tRNA.

It belongs to the MnmA/TRMU family.

The protein resides in the cytoplasm. The catalysed reaction is S-sulfanyl-L-cysteinyl-[protein] + uridine(34) in tRNA + AH2 + ATP = 2-thiouridine(34) in tRNA + L-cysteinyl-[protein] + A + AMP + diphosphate + H(+). Functionally, catalyzes the 2-thiolation of uridine at the wobble position (U34) of tRNA, leading to the formation of s(2)U34. This Enterococcus faecalis (strain ATCC 700802 / V583) protein is tRNA-specific 2-thiouridylase MnmA.